Consider the following 393-residue polypeptide: Flavohemoprotein (393 aa).

The 139-residue stretch at 1–139 (MLSNAQRALI…LADLLIEAEE (139 aa)) folds into the Globin domain. Residue His85 coordinates heme b. Catalysis depends on charge relay system residues Tyr95 and Glu138. The tract at residues 150–393 (GGWRGVRRFR…FFGPAAALDA (244 aa)) is reductase. The region spanning 153 to 256 (RGVRRFRVAR…FPPAGDFVLR (104 aa)) is the FAD-binding FR-type domain. FAD contacts are provided by residues Tyr191 and 205–208 (RNYS). An NADP(+)-binding site is contributed by 268 to 273 (GVGITP). 384-387 (FFGP) is an FAD binding site.

Belongs to the globin family. Two-domain flavohemoproteins subfamily. The protein in the C-terminal section; belongs to the flavoprotein pyridine nucleotide cytochrome reductase family. Heme b is required as a cofactor. FAD serves as cofactor.

It carries out the reaction 2 nitric oxide + NADPH + 2 O2 = 2 nitrate + NADP(+) + H(+). The catalysed reaction is 2 nitric oxide + NADH + 2 O2 = 2 nitrate + NAD(+) + H(+). Functionally, is involved in NO detoxification in an aerobic process, termed nitric oxide dioxygenase (NOD) reaction that utilizes O(2) and NAD(P)H to convert NO to nitrate, which protects the bacterium from various noxious nitrogen compounds. Therefore, plays a central role in the inducible response to nitrosative stress. This is Flavohemoprotein from Pseudomonas aeruginosa (strain ATCC 15692 / DSM 22644 / CIP 104116 / JCM 14847 / LMG 12228 / 1C / PRS 101 / PAO1).